The sequence spans 78 residues: Pancreatic polypeptide prohormone (78 aa).

The first 19 residues, Leu-1–Gly-19, serve as a signal peptide directing secretion. Residue Tyr-55 is modified to Tyrosine amide.

It belongs to the NPY family.

It localises to the secreted. In terms of biological role, hormone secreted by pancreatic cells that acts as a regulator of pancreatic and gastrointestinal functions probably by signaling through the G protein-coupled receptor NPY4R2. The chain is Pancreatic polypeptide prohormone (PPY) from Ovis aries (Sheep).